A 206-amino-acid chain; its full sequence is Outer-membrane lipoprotein carrier protein (206 aa).

Residues 1–21 form the signal peptide; that stretch reads MKKLLCAVLLSPLLYSNAVLA.

Belongs to the LolA family. In terms of assembly, monomer.

It localises to the periplasm. Functionally, participates in the translocation of lipoproteins from the inner membrane to the outer membrane. Only forms a complex with a lipoprotein if the residue after the N-terminal Cys is not an aspartate (The Asp acts as a targeting signal to indicate that the lipoprotein should stay in the inner membrane). This Shewanella sp. (strain MR-7) protein is Outer-membrane lipoprotein carrier protein.